The primary structure comprises 331 residues: MKLWFPYFLAIVFLHALGLALLFMANNASFYAAASMAYMLGAKHAFDADHIACIDNTIRKLTQQGKNAYGVGFYFSMGHSSVVILMTIISAFAIAWAKEHTPMLEEIGGVVGTLVSGLFLLIIGLLNAIILIDLLKIFKKSHSNESLSRQQNEEIERLLTSRGLLNRFFKPLFNFVSKSWHIYPVGFLFGLGFDTASEIALLALSSSAIKVSVVGMLSLPILFAAGMSLFDTLDGAFMLKAYDWAFKTPLRKIYYNISITALSVFIALFIGLIELFQVISEKLHLKFENRLLSTLQSLEFTDLGYYLVGLFVIAFLGSFFLWKIKFSKLES.

7 helical membrane passes run leucine 3–phenylalanine 23, methionine 77–alanine 97, valine 110–isoleucine 130, proline 184–leucine 204, valine 213–leucine 233, isoleucine 259–isoleucine 279, and aspartate 302–tryptophan 322.

Belongs to the NiCoT transporter (TC 2.A.52) family.

It is found in the cell inner membrane. Functionally, high-affinity nickel intake protein. Imports nickel ions in an energy-dependent fashion. Necessary for the expression of catalytically active urease. This Helicobacter pylori (strain J99 / ATCC 700824) (Campylobacter pylori J99) protein is High-affinity nickel-transport protein NixA (nixA).